The primary structure comprises 345 residues: Phenylalanine--tRNA ligase alpha subunit (345 aa).

A Mg(2+)-binding site is contributed by Glu259.

Belongs to the class-II aminoacyl-tRNA synthetase family. Phe-tRNA synthetase alpha subunit type 1 subfamily. In terms of assembly, tetramer of two alpha and two beta subunits. Mg(2+) is required as a cofactor.

The protein localises to the cytoplasm. It catalyses the reaction tRNA(Phe) + L-phenylalanine + ATP = L-phenylalanyl-tRNA(Phe) + AMP + diphosphate + H(+). The protein is Phenylalanine--tRNA ligase alpha subunit of Lactococcus lactis subsp. cremoris (strain SK11).